The following is a 386-amino-acid chain: 2-deoxy-scyllo-inosose synthase (386 aa).

NAD(+) contacts are provided by residues aspartate 42, 73–76 (EEHK), 105–109 (GVTGN), 129–130 (TT), 140–142 (SLK), and 151–152 (KN). The active site involves lysine 142. Glutamate 184 is a binding site for Co(2+). Residue glutamate 244 is part of the active site. Co(2+) contacts are provided by histidine 247 and histidine 263.

Belongs to the sugar phosphate cyclases superfamily. DOI synthase family. NAD(+) is required as a cofactor. Co(2+) serves as cofactor.

It carries out the reaction D-glucose 6-phosphate = 2-deoxy-L-scyllo-inosose + phosphate. It functions in the pathway metabolic intermediate biosynthesis; 2-deoxystreptamine biosynthesis; 2-deoxystreptamine from D-glucose 6-phosphate: step 1/4. Its pathway is antibiotic biosynthesis; tobramycin biosynthesis. Catalyzes the intramolecular carbocycle formation from D-glucose-6-phosphate to 2-deoxy-scyllo-inosose (DOI). In Streptoalloteichus tenebrarius (strain ATCC 17920 / DSM 40477 / JCM 4838 / CBS 697.72 / NBRC 16177 / NCIMB 11028 / NRRL B-12390 / A12253. 1 / ISP 5477) (Streptomyces tenebrarius), this protein is 2-deoxy-scyllo-inosose synthase (tbmA).